The sequence spans 1720 residues: Merozoite surface protein 1 (1720 aa).

Positions 1–19 (MKIIFFLCSFLFFIINTQC) are cleaved as a signal peptide. Residues 63–112 (ASAQSGASAQSGASAQSGASAQSGASAQSGASAQSGTSGPSGPSGTSPSS) are compositionally biased toward low complexity. The tract at residues 63–137 (ASAQSGASAQ…PPADASDSDA (75 aa)) is disordered. Positions 113 to 122 (RSNTLPRSNT) are enriched in polar residues. Residues 123–132 (SSGASPPADA) show a composition bias toward low complexity. The stretch at 474–519 (INNIKKKIDLEEKNINHTKEQNKKLLEDYEKSKKDYEELLEKFYEM) forms a coiled coil. 4 disordered regions span residues 723-775 (SETT…PPKE), 908-955 (TGTS…SGPA), 1249-1278 (TPPQPDVTPSPLSVRVSGSSGSTKEETQIP), and 1470-1491 (KEKFPSSPPTTPPSPAKTDEQK). The segment covering 743–753 (EVTEETEETEE) has biased composition (acidic residues). A compositionally biased stretch (low complexity) spans 908–946 (TGTSSTSSPGNTTVNTAQSATHSNSQNQQSNASSTNTQN). A compositionally biased stretch (polar residues) spans 1264–1278 (VSGSSGSTKEETQIP). The span at 1475–1484 (SSPPTTPPSP) shows a compositional bias: pro residues. 2 consecutive EGF-like domains span residues 1611–1651 (HQCV…VENP) and 1652–1693 (NPTC…YPLF). Cystine bridges form between Cys1613–Cys1624, Cys1618–Cys1634, Cys1636–Cys1647, Cys1655–Cys1668, Cys1662–Cys1682, and Cys1684–Cys1698. Ser1699 is lipidated: GPI-anchor amidated serine. Positions 1700–1720 (SSNFLGISFLLILMLILYSFI) are cleaved as a propeptide — removed in mature form.

As to quaternary structure, forms a complex composed of subunits p83, p30, p38, and p42 which remain non-covalently associated; the complex is formed at the merozoite surface prior to egress from host erythrocytes. Forms a complex composed of processed MSP1 subunits, MSP6 subunit p36 and MSP7; the complex is formed at the merozoite surface prior to egress from host erythrocytes. Within the complex, interacts (via subunit p38) with MSP6 subunit p36 and (via subunits p83, p30 and p38) with MSP7 (via subunit p22). Forms a complex composed of MSP1, MSP6, DBLMSP1 and DBLMSP2. Within the complex, interacts (via subunit p38) with DBLMSP1 and DBLMSP2. Forms a complex composed of MSP1, and rhoptry proteins RhopH3, RAP1 and CLAG9/RhopH3. Within the complex, interacts (via subunits p42 and p19) with RhopH3 (via C-terminus). Forms a complex composed of MSP1, MSP6, MSP7, MSP9 and MSP3; within the complex, MSP6 and MSP9 mediate the binding to the host erythrocyte. Interacts (via subunits p19 and p42) with MSP9; the interaction is direct; MSP1 subunits p19 or p42, and MSP9 form a co-ligand complex that interacts with host SLC4A1/Band 3 protein. May interact with PFD6. Interacts with host spectrin. In terms of assembly, interacts with host glycophorin GYPA in a sialic acid-independent manner. Interacts with host proinflammatory cytokine S100P; the interaction blocks S100P inflammatory and chemotactic activities. As to quaternary structure, interacts with host SLC4A1/Band 3 (via 5ABC region) on the host erythrocyte surface in a sialic acid-independent manner. In terms of processing, the p190 precursor is cleaved by SUB1 prior to merozoite egress into 4 subunits p83, p30, p38, and p42 which remain non-covalently associated. SUB1-mediated proteolytic cleavage occurs in an orderly manner; the first cleavage occurs at the p30/p38 site, followed by cleavage at the p83/p30 site, in the 3D7 strain a second cleavage occurs at the N-terminus of p83, the last cleavage occurs at the p38/p42 site. The order of cleavage is essential for parasite viability. SUB1-mediated processing is essential for merozoite egress. In a second processing step during erythrocyte invasion, p42 is cleaved by SUB2 into p33 and p19; the latter remains attached to the merozoite surface via its GPI-anchor and is endocytosed during the subsequent ring stage.

It localises to the cell membrane. It is found in the secreted. Its subcellular location is the vacuole membrane. In terms of biological role, during the asexual blood stage, involved in merozoite egress from host erythrocytes possibly via its interaction with the host cytoskeleton protein spectrin resulting in the destabilization of the host cytoskeleton and thus leading to erythrocyte cell membrane rupture. Involved in the binding to host erythrocytes and is required for host erythrocyte invasion. By binding to host proinflammatory cytokine S100P may interfere with host immune responses. Functionally, involved in merozoite invasion of host erythrocytes. May play a role in the biogenesis and/or function of the food vacuole during the intraerythrocytic development. The polypeptide is Merozoite surface protein 1 (Plasmodium falciparum (isolate 3D7)).